A 602-amino-acid polypeptide reads, in one-letter code: MVSTKVKPTTTTTPTTTVNKTTQPTTTTTASKKVKQTKQSKAQAKEIQELASTPSVKQIQSQKVLVPKLEETKPITPPDQEEEDQEEEEQEQEEEENENNDNNTGNVSEKELGISKESIEFSNLPIEENTKKSIEEMGFKKMTPIQAKSILPLLEGKDLLGAARTGSGKTLAFLIPAIEVLVKSNFKPRNGTGVIIISPTRELALQIYGVARELMKYHTQTHGIVIGGASKKPEEERLEKGVNLLVATPGRLLDHLQNTKGFITKNLKCLIIDEADRILEVGFEEEMHQIIKKVPKTRQTMLFSATQTRKVDDIAKVSLNNSPVYVGVDDEREISTVEGLEQGYVVCPSERRFLLLYTFLKKNLSKKIIVFLSSCNAVKYTAELLNYIDIPVLELHGRQKQQKRTNTFYEFVNAEKGILICTDVAARGLDIPSVDWIIQYDPPDDPKEYIHRVGRTARGVGKKGRALLFLLPKELGFLKYLKLAKVPLNEYEFPKSKIANVQDQLEKVVSQNFYLYNSARDAYKAYICAYASHSLKDIFDVNALDLQCVAKAFGFLDPPKVNLNVNSSGKADFQKKSNNKSGFAQKQYGSKFPPKDGRQFDR.

Over residues Met1 to Ser31 the composition is skewed to low complexity. Residues Met1–Ser108 form a disordered region. Residues Leu50–Lys63 are compositionally biased toward polar residues. Over residues Asp79 to Asn99 the composition is skewed to acidic residues. The Q motif signature appears at Ile119–Ala147. Residues Ile150–Tyr325 enclose the Helicase ATP-binding domain. Ala163–Thr170 is a binding site for ATP. Positions Asp273 to Asp276 match the DEAD box motif. Residues Gly339–Val509 enclose the Helicase C-terminal domain. Residues Ser568–Arg602 form a disordered region. Residues Asn579–Tyr588 are compositionally biased toward polar residues. A compositionally biased stretch (basic and acidic residues) spans Pro593–Arg602.

Belongs to the DEAD box helicase family. DDX18/HAS1 subfamily.

It localises to the nucleus. The protein resides in the nucleolus. Its subcellular location is the chromosome. The catalysed reaction is ATP + H2O = ADP + phosphate + H(+). Its function is as follows. ATP-binding RNA helicase which may be involved in the ribosome biogenesis. The protein is Probable ATP-dependent RNA helicase ddx18 (ddx18) of Dictyostelium discoideum (Social amoeba).